Reading from the N-terminus, the 175-residue chain is Gamma-crystallin B (175 aa).

Beta/gamma crystallin 'Greek key' domains lie at 2–40 (GKIT…RVDS) and 41–83 (GCWM…RLIP). The interval 84-88 (QHSGT) is connecting peptide. Beta/gamma crystallin 'Greek key' domains lie at 89–129 (YRMR…NVME) and 130–172 (GCWV…RRVM).

It belongs to the beta/gamma-crystallin family.

Crystallins are the dominant structural components of the vertebrate eye lens. This is Gamma-crystallin B (Crygb) from Rattus norvegicus (Rat).